The primary structure comprises 168 residues: uncharacterized protein (168 aa).

CBS domains are found at residues 20-77 (IMKK…NEDL) and 117-168 (MTRK…EALI).

This is an uncharacterized protein from Methanocaldococcus jannaschii (strain ATCC 43067 / DSM 2661 / JAL-1 / JCM 10045 / NBRC 100440) (Methanococcus jannaschii).